The primary structure comprises 622 residues: DNA mismatch repair protein MutL (622 aa).

It belongs to the DNA mismatch repair MutL/HexB family.

In terms of biological role, this protein is involved in the repair of mismatches in DNA. It is required for dam-dependent methyl-directed DNA mismatch repair. May act as a 'molecular matchmaker', a protein that promotes the formation of a stable complex between two or more DNA-binding proteins in an ATP-dependent manner without itself being part of a final effector complex. This chain is DNA mismatch repair protein MutL, found in Prosthecochloris aestuarii (strain DSM 271 / SK 413).